The chain runs to 130 residues: Large ribosomal subunit protein bL17 (130 aa).

The protein belongs to the bacterial ribosomal protein bL17 family. In terms of assembly, part of the 50S ribosomal subunit. Contacts protein L32.

This chain is Large ribosomal subunit protein bL17, found in Paraburkholderia xenovorans (strain LB400).